The chain runs to 373 residues: Chorismate synthase (373 aa).

The NADP(+) site is built by Arg-48 and Arg-54. Residues 131 to 133 (RSS), 243 to 244 (NA), Gly-288, 303 to 307 (KPTSS), and Arg-329 each bind FMN.

It belongs to the chorismate synthase family. In terms of assembly, homotetramer. It depends on FMNH2 as a cofactor.

It carries out the reaction 5-O-(1-carboxyvinyl)-3-phosphoshikimate = chorismate + phosphate. Its pathway is metabolic intermediate biosynthesis; chorismate biosynthesis; chorismate from D-erythrose 4-phosphate and phosphoenolpyruvate: step 7/7. In terms of biological role, catalyzes the anti-1,4-elimination of the C-3 phosphate and the C-6 proR hydrogen from 5-enolpyruvylshikimate-3-phosphate (EPSP) to yield chorismate, which is the branch point compound that serves as the starting substrate for the three terminal pathways of aromatic amino acid biosynthesis. This reaction introduces a second double bond into the aromatic ring system. The chain is Chorismate synthase from Beijerinckia indica subsp. indica (strain ATCC 9039 / DSM 1715 / NCIMB 8712).